A 508-amino-acid chain; its full sequence is Photosystem II CP47 reaction center protein (508 aa).

The next 6 helical transmembrane spans lie at 21 to 36 (AVHI…WAGS), 101 to 115 (IVFS…IWHW), 140 to 156 (GIHL…FGAF), 203 to 218 (IAAG…FHLS), 237 to 252 (VLSS…AFVV), and 457 to 472 (TFAL…HGAR).

Belongs to the PsbB/PsbC family. PsbB subfamily. PSII is composed of 1 copy each of membrane proteins PsbA, PsbB, PsbC, PsbD, PsbE, PsbF, PsbH, PsbI, PsbJ, PsbK, PsbL, PsbM, PsbT, PsbX, PsbY, PsbZ, Psb30/Ycf12, at least 3 peripheral proteins of the oxygen-evolving complex and a large number of cofactors. It forms dimeric complexes. Binds multiple chlorophylls. PSII binds additional chlorophylls, carotenoids and specific lipids. is required as a cofactor.

Its subcellular location is the plastid. It localises to the chloroplast thylakoid membrane. Its function is as follows. One of the components of the core complex of photosystem II (PSII). It binds chlorophyll and helps catalyze the primary light-induced photochemical processes of PSII. PSII is a light-driven water:plastoquinone oxidoreductase, using light energy to abstract electrons from H(2)O, generating O(2) and a proton gradient subsequently used for ATP formation. The sequence is that of Photosystem II CP47 reaction center protein from Hordeum vulgare (Barley).